We begin with the raw amino-acid sequence, 301 residues long: GTPase Era (301 aa).

The Era-type G domain occupies 7–175 (YCGFIAIVGR…ASIVRKHLPE (169 aa)). Residues 15 to 22 (GRPNVGKS) are G1. Position 15–22 (15–22 (GRPNVGKS)) interacts with GTP. The G2 stretch occupies residues 41–45 (QTTRH). A G3 region spans residues 62 to 65 (DTPG). GTP is bound by residues 62-66 (DTPGL) and 124-127 (NKVD). Residues 124-127 (NKVD) are G4. Residues 154–156 (ISA) are G5. In terms of domain architecture, KH type-2 spans 206–283 (LGAELPYSVT…HLELWVKVKS (78 aa)).

This sequence belongs to the TRAFAC class TrmE-Era-EngA-EngB-Septin-like GTPase superfamily. Era GTPase family. Monomer.

It is found in the cytoplasm. The protein resides in the cell inner membrane. Functionally, an essential GTPase that binds both GDP and GTP, with rapid nucleotide exchange. Plays a role in 16S rRNA processing and 30S ribosomal subunit biogenesis and possibly also in cell cycle regulation and energy metabolism. The sequence is that of GTPase Era from Salmonella arizonae (strain ATCC BAA-731 / CDC346-86 / RSK2980).